We begin with the raw amino-acid sequence, 246 residues long: Probable transcriptional regulatory protein RB5500 (246 aa).

This sequence belongs to the TACO1 family.

It is found in the cytoplasm. The protein is Probable transcriptional regulatory protein RB5500 of Rhodopirellula baltica (strain DSM 10527 / NCIMB 13988 / SH1).